Reading from the N-terminus, the 8384-residue chain is Mucin-19 (8384 aa).

The first 21 residues, 1–21 (MKLILWYLVVALWCFFKDVEA), serve as a signal peptide directing secretion. Disordered stretches follow at residues 33 to 197 (AASR…YGAG), 222 to 247 (SKAD…PDAG), 279 to 305 (GDTG…IDLG), and 332 to 467 (QEGF…PEAT). Low complexity-rich tracts occupy residues 35–48 (SRSG…SSSG) and 88–98 (GGFFNSSSSSG). Positions 169 to 184 (DKSRERWDAGNSRSED) are enriched in basic and acidic residues. The segment covering 187-197 (ADSTNTRYGAG) has biased composition (polar residues). The span at 279 to 299 (GDTGISSKTVEGNQTSSSGGS) shows a compositional bias: polar residues. Residues 359–369 (GSDSSSSGDSS) show a composition bias toward low complexity. A compositionally biased stretch (polar residues) spans 370 to 381 (ARNGFENSSGIS). Composition is skewed to low complexity over residues 424–435 (SDSGGNTWSSDS) and 443–452 (TSSSEYSTSG). 3 VWFD domains span residues 478–649 (GEIS…QHCN), 815–995 (GRCK…SSCI), and 1274–1447 (TICH…QECS). Cystine bridges form between C502-C648, C817-C952, C838-C994, C857-C865, C1276-C1411, C1298-C1446, C1307-C1408, and C1323-C1330. 27 disordered regions span residues 1680-1699 (TSSS…PFTT), 1732-2464 (AGTT…KSPG), 2484-2526 (LESE…TEGS), 2540-2827 (RPLD…MTGT), 2850-2917 (STVG…LGTI), 2984-3027 (VTTG…SGTT), 3075-3368 (GTTG…GKTG), 3386-3428 (TTRL…GKTG), 3585-3628 (ETTG…TNGL), 3667-3736 (GSSA…TGLP), 4105-4147 (TGSS…NGLS), 4187-4251 (SAGV…AEVT), 4315-4390 (GLSA…SARV), 4414-4455 (TGSS…TNGQ), 4510-4583 (TGTT…TGLP), 4790-4843 (TGTT…TGLP), 4895-4930 (SSAG…AGVT), 5130-5161 (TGTT…GVTG), 5429-5452 (VTGT…VTGK), 5464-5494 (GPSA…GTTG), 5880-5918 (GTSI…SAEM), 6069-6403 (TGKT…STES), 6440-6918 (GRAT…ETTK), 6953-7223 (GTSE…TGFK), 7250-7749 (SFST…SKTG), 7783-7975 (KNGS…EAGS), and 8020-8133 (SGRS…VSQP). 3 stretches are compositionally biased toward low complexity: residues 1732 to 1746 (AGTT…TGAA), 1772 to 1813 (PGEA…TTGP), and 1820 to 1833 (GATS…EGMS). Residues 1835-1860 (VTGQSLGSTAGSDSEITAKTSFTGSS) are compositionally biased toward polar residues. Residues 1868–1879 (PSPGSPGHFSGG) show a composition bias toward low complexity. The segment covering 1880–1905 (TTEWGNVATTGAAGENTSGALGSTEG) has biased composition (polar residues). Positions 1909 to 1921 (ATTSAGSGNTAGT) are enriched in low complexity. The span at 1950–1968 (GSSTPGEADIGNTSFGKSG) shows a compositional bias: polar residues. Composition is skewed to low complexity over residues 1969-1983 (TPTV…SPVS) and 2013-2049 (GGKI…SGPS). Residues 2055 to 2100 (NYGQSSEIPGTIKSSSDVSGTMGQSDTTSGPSVAVTRTSEQSSGVT) are compositionally biased toward polar residues. Composition is skewed to low complexity over residues 2132-2147 (TTGS…GPSS) and 2159-2170 (GSGTSGQSVTGS). Polar residues-rich tracts occupy residues 2171 to 2186 (RATG…TVSF) and 2209 to 2225 (GSGT…TTRL). 2 stretches are compositionally biased toward low complexity: residues 2233-2246 (TESS…TTPS) and 2280-2313 (SGPS…TKPS). The interval 2238-6086 (GVTGTTTPSA…GVTGTTGLSA (3849 aa)) is approximate repeats of G-V-T-G-T-T-G-P-S-A. Composition is skewed to polar residues over residues 2316–2332 (RTGT…TTEP) and 2354–2372 (ATES…TTIP). Gly residues predominate over residues 2403 to 2419 (SSGGSGATRSSGGGMGT). The span at 2420-2441 (TGQSTARSETTGPLFGLTGTFG) shows a compositional bias: low complexity. Residues 2442 to 2460 (QSATVTGTSSNSAGVTTPE) show a composition bias toward polar residues. Low complexity-rich tracts occupy residues 2512–2526 (SAGE…TEGS), 2545–2571 (GSGT…TTRK), and 2578–2589 (TTGLSGLTGTSG). Composition is skewed to polar residues over residues 2595–2610 (TGTS…TSEK) and 2638–2653 (TRPS…QSAR). The segment covering 2654-2681 (VTETVGASAGVTGTTGPSTEGSGATGPS) has biased composition (low complexity). 2 stretches are compositionally biased toward polar residues: residues 2695 to 2748 (SGTT…TGTT) and 2755 to 2770 (TETT…TTGP). A compositionally biased stretch (low complexity) spans 2787–2799 (ATRSSGGETETTG). Polar residues-rich tracts occupy residues 2800–2827 (QSAV…MTGT), 2850–2859 (STVGLETTRP), and 2874–2892 (AQTT…QSAR). Positions 2894 to 2910 (TGASGPSVGVTGTTGPA) are enriched in low complexity. Residues 2984–2998 (VTTGPSVTGVETTAK) are compositionally biased toward polar residues. Over residues 2999 to 3027 (TTSGGLSTTISSVGGTGTTGQSPERSGTT) the composition is skewed to low complexity. Residues 3099–3109 (PSITGSGTTRP) show a composition bias toward polar residues. The segment covering 3114–3130 (SWTAGTSSGGHSTTSPS) has biased composition (low complexity). Residues 3131–3159 (VRGTETTGQSAAESVTTGPVTGYTETSGP) show a composition bias toward polar residues. The segment covering 3172–3188 (TVTQTTGSSAAVSGTTV) has biased composition (low complexity). The segment covering 3189-3224 (QSLTVSGTTRPSSGQTEITGSSVKESGTTESSAVRS) has biased composition (polar residues). The segment covering 3225-3277 (GTTGPTAGVTGTNGPSSAGVTGITGSSPGVTGTTGSSPGVTGTTGSSARSGTS) has biased composition (low complexity). Polar residues-rich tracts occupy residues 3303-3317 (ITGT…TGTT) and 3324-3362 (TGTT…SSAG). Residues 3390–3417 (SAGVTGTTGPSPGVTGTTGTPAGVTGTT) show a composition bias toward low complexity. Composition is skewed to polar residues over residues 3702–3728 (VTGT…TTGP) and 4105–4116 (TGSSARSGTSIP). Over residues 4117–4126 (SVGETGTTRT) the composition is skewed to low complexity. Residues 4320–4346 (VTGTTRPSAGVTGTTGQSAEVTGTTEP) show a composition bias toward polar residues. Composition is skewed to low complexity over residues 4347–4385 (SAGL…GTTG) and 4414–4426 (TGSS…STPS). Composition is skewed to low complexity over residues 5469–5494 (VTGT…GTTG) and 5889–5903 (TGTT…TTTG). Polar residues-rich tracts occupy residues 5908 to 5918 (ITGTNGLSAEM), 6071 to 6103 (KTRS…TTKT), and 6111 to 6121 (TRPSAGITATT). Residues 6156–6168 (TTTGTTGVTTGTT) are compositionally biased toward low complexity. Polar residues-rich tracts occupy residues 6217–6248 (EVST…TATT) and 6257–6275 (APGS…SAST). The segment covering 6284-6295 (TGSTRGVRTTGS) has biased composition (low complexity). Polar residues-rich tracts occupy residues 6303 to 6323 (GEFS…TTLT) and 6336 to 6346 (ESTTSLPQSAK). Low complexity predominate over residues 6378–6389 (SGTTISSGGSHT). 2 stretches are compositionally biased toward polar residues: residues 6440-6457 (GRAT…TSQA) and 6470-6503 (TTIT…TTYI). Low complexity predominate over residues 6507–6523 (GTTRGGLATATTGAFSG). A compositionally biased stretch (polar residues) spans 6560-6571 (TTFTSGGSHTEA). Residues 6581 to 6597 (TGTESRAATTRAAPGTT) are compositionally biased toward low complexity. Polar residues predominate over residues 6599–6608 (VPGSSNTGAT). Residues 6612–6628 (GGSATTRGRITTATTGA) show a composition bias toward low complexity. 2 stretches are compositionally biased toward polar residues: residues 6669–6680 (RITSGGSYTATT) and 6689–6698 (APGSSNTGAT). A compositionally biased stretch (low complexity) spans 6707–6718 (TRGRITTATTGA). The span at 6752-6766 (TTLTGDRSSTGSESR) shows a compositional bias: polar residues. Residues 6767-6781 (TATTGVAPGTTVAPG) are compositionally biased toward low complexity. The span at 6794 to 6817 (SGTTNIGRATGATTSIVGSDTSQA) shows a compositional bias: polar residues. Over residues 6827–6842 (SPGASSTSQSSRPGTS) the composition is skewed to low complexity. A compositionally biased stretch (polar residues) spans 6843–6875 (VTPDSSASESETVTTKEFSGTTAISRTSHTGTP). Residues 6887–6901 (TATTGVAPGTTVAPG) show a composition bias toward low complexity. Polar residues-rich tracts occupy residues 6902–6911 (SSNTEATTSV) and 6953–6964 (GTSEVAPSTTVA). Low complexity predominate over residues 6966–6994 (GSFSTAATTSPGASGTTGVTTTTKTTTSL). Residues 7006–7041 (SATTGAPGSRTGTAGVPSATTVSPGSSNSEATTSVG) show a composition bias toward polar residues. The segment covering 7045–7074 (KTGAETITEATTSTEGTGTSGTGFKTGTSE) has biased composition (low complexity). The segment covering 7085–7094 (SFSTAATTSP) has biased composition (polar residues). The span at 7095 to 7112 (GASGMTGVTTTTKTTTSL) shows a compositional bias: low complexity. A compositionally biased stretch (polar residues) spans 7143 to 7158 (TRVTPGSSNSEATTSV). Low complexity-rich tracts occupy residues 7201–7215 (SGSS…TEGT) and 7250–7276 (SFST…TTSL). Residues 7293-7311 (SGTTVAPGSSNSEATTSVG) show a composition bias toward polar residues. The span at 7379–7397 (TTSTKGTGTSGTGFKTGTS) shows a compositional bias: low complexity. Positions 7403–7421 (TTVSPGSFSTATISPGASR) are enriched in polar residues. Residues 7422–7435 (TTGAAPAAETTTSL) show a composition bias toward low complexity. Polar residues predominate over residues 7465 to 7483 (SATTIAPGSSNSEATTSLG). The segment covering 7525–7537 (PLGGASGTSGGYV) has biased composition (gly residues). Composition is skewed to polar residues over residues 7544–7557 (PTTS…SRTI) and 7571–7596 (AGTS…TSPG). A compositionally biased stretch (low complexity) spans 7600-7613 (MTGVRTTSKTTTSL). Composition is skewed to polar residues over residues 7642 to 7669 (SSRT…SGTG) and 7698 to 7708 (SFSTAATTSPG). A compositionally biased stretch (low complexity) spans 7715-7732 (TGPTAETTTFLGGSSTTG). The span at 7783-7811 (KNGSMTTALGSQLSSSQTVIPGSSGTISH) shows a compositional bias: polar residues. Positions 7812–7828 (TTVAPGSSVTGTTTGAS) are enriched in low complexity. The span at 7830 to 7851 (DQVTGSKTGTTGVALSTTVAPG) shows a compositional bias: polar residues. A compositionally biased stretch (low complexity) spans 7852–7861 (SSSTEATTST). The segment covering 7862–7891 (GVHRTTVVGQKTGATTRGSAKQGTRSTIEA) has biased composition (polar residues). Residues 7892–7917 (TTSFRGTGTTGSGMNTGTTGVVSGNT) are compositionally biased toward low complexity. Polar residues predominate over residues 7918–7934 (ISPSSFNTEATSGTSER). Over residues 7938-7952 (GSEIGTTGIVSGTTV) the composition is skewed to low complexity. Composition is skewed to polar residues over residues 7953-7965 (APGS…TTSL), 8020-8040 (SGRS…SGTT), 8048-8081 (TGNT…SISG), and 8110-8120 (ETGVQTGSTLV). Residues 8159–8225 (PVCHGPLGEE…DTCCEIGYCE (67 aa)) form the VWFC domain. 4 cysteine pairs are disulfide-bonded: C8288–C8339, C8306–C8353, C8315–C8369, and C8319–C8371. Positions 8288–8376 (CKNNCRSSLV…TTCSCLDICQ (89 aa)) constitute a CTCK domain.

In terms of tissue distribution, expressed corneal epithelial cells, conjunctival goblet and epithelial cells and lacrimal gland cells (at protein level). Expressed by mucous cells of the submandibular gland and submucosal gland of the trachea. Expressed by middle ear epithelial cells.

The protein localises to the secreted. Functionally, may function in ocular mucus homeostasis. In Homo sapiens (Human), this protein is Mucin-19 (MUC19).